The chain runs to 681 residues: Cadmium, zinc and cobalt-transporting ATPase (681 aa).

The 66-residue stretch at 1 to 66 folds into the HMA domain; that stretch reads MQKYHFTGLD…LEPDMELSEQ (66 aa). The Cytoplasmic segment spans residues 1 to 72; the sequence is MQKYHFTGLD…LSEQVQSEAK (72 aa). The Cd(2+) site is built by Cys11 and Cys14. Residues Cys11 and Cys14 each coordinate Co(2+). The Zn(2+) site is built by Cys11 and Cys14. Residues 73–92 form a helical membrane-spanning segment; the sequence is PSAIPLLLSVVLYLIAVATI. Over 93–102 the chain is Extracellular; that stretch reads HFSAQNWALH. Residues 103–124 form a helical membrane-spanning segment; that stretch reads LSYALLAGVYLVAGKDVFLGAL. Residues 125–131 are Cytoplasmic-facing; sequence RAIRNKQ. Residues 132-151 traverse the membrane as a helical segment; that stretch reads FFDENTLMLSATIAAFGVGA. Residues 152-154 lie on the Extracellular side of the membrane; sequence HEE. A helical membrane pass occupies residues 155 to 174; sequence AVSIMVFYSAGEFLQQLAIA. The Cytoplasmic segment spans residues 175–308; that stretch reads RSKQSLHALL…ITTFARYYTP (134 aa). A helical membrane pass occupies residues 309-327; that stretch reads AVFAIALLIALVPPLLGHG. At 328 to 332 the chain is on the extracellular side; the sequence is DFDTW. Residues 333–350 form a helical membrane-spanning segment; the sequence is IYRGLFALMVSCPCALVI. The Cytoplasmic portion of the chain corresponds to 351 to 630; the sequence is SVPLGYFGGV…VFKIAKKTKR (280 aa). Asp388 functions as the 4-aspartylphosphate intermediate in the catalytic mechanism. Mg(2+) is bound by residues Asp578 and Asp582. A helical membrane pass occupies residues 631–652; that stretch reads IIIENIIFALAIKAMFIVLGLS. The Extracellular portion of the chain corresponds to 653-660; that stretch reads GDASLWEA. Residues 661-676 traverse the membrane as a helical segment; sequence VLGDVGVTLIALANSM. The Cytoplasmic portion of the chain corresponds to 677–681; that stretch reads RTMRI.

It belongs to the cation transport ATPase (P-type) (TC 3.A.3) family. Type IB subfamily.

It is found in the cell membrane. It catalyses the reaction Zn(2+)(in) + ATP + H2O = Zn(2+)(out) + ADP + phosphate + H(+). The enzyme catalyses Cd(2+)(in) + ATP + H2O = Cd(2+)(out) + ADP + phosphate + H(+). Its function is as follows. Couples the hydrolysis of ATP with the transport of cadmium, zinc and cobalt out of the cell. The protein is Cadmium, zinc and cobalt-transporting ATPase (cadA) of Helicobacter felis.